Reading from the N-terminus, the 569-residue chain is Urease subunit alpha (569 aa).

A Urease domain is found at 131 to 569; that stretch reads GSIDTHIHFI…VPMAQRYFLL (439 aa). Positions 136, 138, and 219 each coordinate Ni(2+). Lys219 is subject to N6-carboxylysine. A substrate-binding site is contributed by His221. 2 residues coordinate Ni(2+): His248 and His274. The Proton donor role is filled by His322. Residue Asp362 coordinates Ni(2+).

This sequence belongs to the metallo-dependent hydrolases superfamily. Urease alpha subunit family. In terms of assembly, heterotrimer of UreA (gamma), UreB (beta) and UreC (alpha) subunits. Three heterotrimers associate to form the active enzyme. Ni cation is required as a cofactor. Post-translationally, carboxylation allows a single lysine to coordinate two nickel ions.

The protein resides in the cytoplasm. It catalyses the reaction urea + 2 H2O + H(+) = hydrogencarbonate + 2 NH4(+). It participates in nitrogen metabolism; urea degradation; CO(2) and NH(3) from urea (urease route): step 1/1. This is Urease subunit alpha from Prochlorococcus marinus (strain MIT 9215).